The primary structure comprises 375 residues: MSDDPEDRMLGWDESVFRDEHVFEIDWLPETFKHRDTQMETLKYALRPAVRGSRPLNVIARGPPGTGKTTAVQILFDELTAQTDVKTVRVNCQMDSTRYAVFSRLFAEIFDYEPPSSGISFKKLFSQITDKLVEEDEVLVVALDDVNYLFYESEASDTLYSLLRAHEAHSGAKIGVICVSSDLELDTIDALDTRVQSVFRPEEVYFNPYGQAEIADILGERADRGFNEGVVGPTVLDRVAELTEEQGGDLRVGIDLLRRAGMNAEMRASRSVETEDVEAAYDKSKYVHLSRRLRELSDSETALVEVIAAHDGQQAGDIYDAFSEQTDLGYTRYSEIINKLDQLDIIDADYTNVEGRGRSRELTLNYDADAVLERL.

Residues 66–70 (TGKTT), Tyr-209, and Arg-221 each bind ATP.

This sequence belongs to the CDC6/cdc18 family.

In terms of biological role, involved in regulation of DNA replication. The polypeptide is ORC1-type DNA replication protein 3 (cdc6c) (Haloarcula marismortui (strain ATCC 43049 / DSM 3752 / JCM 8966 / VKM B-1809) (Halobacterium marismortui)).